Reading from the N-terminus, the 291-residue chain is ATP synthase gamma chain (291 aa).

The protein belongs to the ATPase gamma chain family. In terms of assembly, F-type ATPases have 2 components, CF(1) - the catalytic core - and CF(0) - the membrane proton channel. CF(1) has five subunits: alpha(3), beta(3), gamma(1), delta(1), epsilon(1). CF(0) has three main subunits: a, b and c.

The protein localises to the cell inner membrane. Produces ATP from ADP in the presence of a proton gradient across the membrane. The gamma chain is believed to be important in regulating ATPase activity and the flow of protons through the CF(0) complex. This Sinorhizobium medicae (strain WSM419) (Ensifer medicae) protein is ATP synthase gamma chain.